A 283-amino-acid polypeptide reads, in one-letter code: NAD kinase (283 aa).

Asp-66 functions as the Proton acceptor in the catalytic mechanism. Residues 66 to 67 (DG), 140 to 141 (ND), Arg-151, Lys-168, Asp-170, 181 to 186 (TGYCLS), and Gln-240 each bind NAD(+).

It belongs to the NAD kinase family. The cofactor is a divalent metal cation.

It is found in the cytoplasm. It carries out the reaction NAD(+) + ATP = ADP + NADP(+) + H(+). Involved in the regulation of the intracellular balance of NAD and NADP, and is a key enzyme in the biosynthesis of NADP. Catalyzes specifically the phosphorylation on 2'-hydroxyl of the adenosine moiety of NAD to yield NADP. The chain is NAD kinase from Geobacter metallireducens (strain ATCC 53774 / DSM 7210 / GS-15).